A 481-amino-acid chain; its full sequence is E3 ubiquitin-protein ligase makorin-1 (481 aa).

3 consecutive C3H1-type zinc fingers follow at residues 55–82 (WTKQ…HDLS), 84–111 (SPYG…HSKP), and 208–235 (ETKK…HGDS). The segment at 236–263 (CDMCGLQVLHPVDAAQRSQHIKSCIEAH) is makorin-type Cys-His. An RING-type zinc finger spans residues 281-335 (CGICMEVVYEKANPSERRFGILSNCNHTYCLKCIRKWRSAKQFESKIIKSCPECR). A C3H1-type 4 zinc finger spans residues 364–393 (AMSNKACRYFDEGRGSCPFGGNCFYKHAYP).

In terms of assembly, interacts with p53/TP53 and CDKN1A. Interacts with TERT, modulating telomere length homeostasis. Post-translationally, auto-ubiquitinated; which leads to proteasomal degradation. Highly expressed in embryo, in specific cell types of the central nervous system, in brain with the strongest levels of expression in the mantle layers and in testis. Moderate to low levels in somatic tissues.

The catalysed reaction is S-ubiquitinyl-[E2 ubiquitin-conjugating enzyme]-L-cysteine + [acceptor protein]-L-lysine = [E2 ubiquitin-conjugating enzyme]-L-cysteine + N(6)-ubiquitinyl-[acceptor protein]-L-lysine.. The protein operates within protein modification; protein ubiquitination. Its function is as follows. E3 ubiquitin ligase catalyzing the covalent attachment of ubiquitin moieties onto substrate proteins. These substrates include FILIP1, p53/TP53, CDKN1A and TERT. Keeps cells alive by suppressing p53/TP53 under normal conditions, but stimulates apoptosis by repressing CDKN1A under stress conditions. Acts as a negative regulator of telomerase. Has negative and positive effects on RNA polymerase II-dependent transcription. The chain is E3 ubiquitin-protein ligase makorin-1 (Mkrn1) from Mus musculus (Mouse).